Consider the following 648-residue polypeptide: Phosphomethylpyrimidine synthase (648 aa).

Substrate-binding positions include Asn-253, Met-282, Tyr-311, His-347, 367–369 (SRG), 408–411 (DGLR), and Glu-447. Zn(2+) is bound at residue His-451. A substrate-binding site is contributed by Tyr-474. His-515 provides a ligand contact to Zn(2+). [4Fe-4S] cluster is bound by residues Cys-595, Cys-598, and Cys-603.

Belongs to the ThiC family. In terms of assembly, homodimer. The cofactor is [4Fe-4S] cluster.

The catalysed reaction is 5-amino-1-(5-phospho-beta-D-ribosyl)imidazole + S-adenosyl-L-methionine = 4-amino-2-methyl-5-(phosphooxymethyl)pyrimidine + CO + 5'-deoxyadenosine + formate + L-methionine + 3 H(+). It participates in cofactor biosynthesis; thiamine diphosphate biosynthesis. Functionally, catalyzes the synthesis of the hydroxymethylpyrimidine phosphate (HMP-P) moiety of thiamine from aminoimidazole ribotide (AIR) in a radical S-adenosyl-L-methionine (SAM)-dependent reaction. This chain is Phosphomethylpyrimidine synthase, found in Burkholderia thailandensis (strain ATCC 700388 / DSM 13276 / CCUG 48851 / CIP 106301 / E264).